The sequence spans 555 residues: Alpha-copaene synthase (555 aa).

The Mg(2+) site is built by aspartate 312, aspartate 316, aspartate 452, serine 456, and glutamate 460. The short motif at 312–316 (DDTYD) is the DDXXD motif element.

Belongs to the terpene synthase family. Requires Mg(2+) as cofactor. As to expression, mainly expressed in sunflower trichomes.

The enzyme catalyses (2E,6E)-farnesyl diphosphate = alpha-copaene + diphosphate. It catalyses the reaction (2E,6E)-farnesyl diphosphate = alpha-muurolene + diphosphate. It carries out the reaction (2E,6E)-farnesyl diphosphate = alpha-humulene + diphosphate. The protein operates within secondary metabolite biosynthesis; terpenoid biosynthesis. Involved in the biosynthesis of germacrene-derived sesquiterpene lactones. Catalyzes the cyclization of farnesyl diphosphate to alpha-copaene, delta-cadinene, alpha-muurolene, beta-caryophyllene and alpha-humulene. In Helianthus annuus (Common sunflower), this protein is Alpha-copaene synthase (CS).